Consider the following 49-residue polypeptide: Large ribosomal subunit protein eL40 (49 aa).

The protein belongs to the eukaryotic ribosomal protein eL40 family.

The protein is Large ribosomal subunit protein eL40 of Methanopyrus kandleri (strain AV19 / DSM 6324 / JCM 9639 / NBRC 100938).